Reading from the N-terminus, the 480-residue chain is Glycogen synthase 1 (480 aa).

An ADP-alpha-D-glucose-binding site is contributed by K15.

The protein belongs to the glycosyltransferase 1 family. Bacterial/plant glycogen synthase subfamily.

It catalyses the reaction [(1-&gt;4)-alpha-D-glucosyl](n) + ADP-alpha-D-glucose = [(1-&gt;4)-alpha-D-glucosyl](n+1) + ADP + H(+). The protein operates within glycan biosynthesis; glycogen biosynthesis. Synthesizes alpha-1,4-glucan chains using ADP-glucose. The polypeptide is Glycogen synthase 1 (glgA1) (Rhizobium meliloti (strain 1021) (Ensifer meliloti)).